We begin with the raw amino-acid sequence, 305 residues long: Fatty acid elongase 1 (305 aa).

The next 7 membrane-spanning stretches (helical) occupy residues 24-44 (MIANVDVVLYISFLYLGFVFI), 80-100 (VVWNLALSIFSIFGTSTVTPV), 129-149 (FWMGIFALSKIPELVDTIFLV), 158-178 (FLHWYHHVTVLLFSWHTYCVG), 183-203 (IWVAAMNYSVHSVMYLYFALA), 217-237 (YITIIQILQMVVGCYVTIFAL), and 257-277 (IQLVMYASYLYLFSKMFVASY). The short motif at 160-164 (HWYHH) is the HxxHH motif element. Residue His-163 is the Nucleophile of the active site. The interval 284-305 (PTVGGPSSTAGVSNGSVEKKVK) is disordered. Positions 288–299 (GPSSTAGVSNGS) are enriched in polar residues. N-linked (GlcNAc...) asparagine glycosylation occurs at Asn-297.

It belongs to the ELO family.

The protein localises to the endoplasmic reticulum membrane. It carries out the reaction an acyl-CoA + malonyl-CoA + H(+) = a 3-oxoacyl-CoA + CO2 + CoA. It participates in lipid metabolism; fatty acid biosynthesis. Involved in the synthesis of fatty acids. Elongates C4 fatty acids to C10. This is Fatty acid elongase 1 from Trypanosoma brucei brucei (strain 927/4 GUTat10.1).